A 319-amino-acid polypeptide reads, in one-letter code: MARQSKKKGRPVSGWIILDKPKGMRSTEAVSQIKYLFHAQKVGHAGTLDPLASGLLPIALGEATKTVPYVMQGTKTYRFHIAWGEERSTDDLEGEITHTSSKRPTREEILALLPQYTGVILQTPPQFSAIKIAGNRAYDLAREGEVVEIPPRQVEIETFKLIEMITKDHSIFEITCGKGTYVRSLARDMGRDLGCYAHIADLRRIAVAPFCENDLITWDELKAVELDKSAKNEKDAPFERNFIKLDELLIETISALECLSHYTLSQTQAQQVMKGNTVLLYHHDVPLDEDEVCVLYQDQLLAIGALEKNQFKPKRLFTI.

The Nucleophile role is filled by aspartate 49.

Belongs to the pseudouridine synthase TruB family. Type 1 subfamily.

It carries out the reaction uridine(55) in tRNA = pseudouridine(55) in tRNA. In terms of biological role, responsible for synthesis of pseudouridine from uracil-55 in the psi GC loop of transfer RNAs. The sequence is that of tRNA pseudouridine synthase B from Bartonella henselae (strain ATCC 49882 / DSM 28221 / CCUG 30454 / Houston 1) (Rochalimaea henselae).